The chain runs to 331 residues: Glyceraldehyde-3-phosphate dehydrogenase (331 aa).

Residues Arg12–Ile13, Asp34, Arg78, and Thr120 contribute to the NAD(+) site. Residues Ser149 to Thr151, Thr180, Thr209 to Gly210, and Arg232 each bind D-glyceraldehyde 3-phosphate. Catalysis depends on Cys150, which acts as the Nucleophile. Asn314 contributes to the NAD(+) binding site.

This sequence belongs to the glyceraldehyde-3-phosphate dehydrogenase family. In terms of assembly, homotetramer.

Its subcellular location is the cytoplasm. It catalyses the reaction D-glyceraldehyde 3-phosphate + phosphate + NAD(+) = (2R)-3-phospho-glyceroyl phosphate + NADH + H(+). It participates in carbohydrate degradation; glycolysis; pyruvate from D-glyceraldehyde 3-phosphate: step 1/5. Its function is as follows. Catalyzes the oxidative phosphorylation of glyceraldehyde 3-phosphate (G3P) to 1,3-bisphosphoglycerate (BPG) using the cofactor NAD. The first reaction step involves the formation of a hemiacetal intermediate between G3P and a cysteine residue, and this hemiacetal intermediate is then oxidized to a thioester, with concomitant reduction of NAD to NADH. The reduced NADH is then exchanged with the second NAD, and the thioester is attacked by a nucleophilic inorganic phosphate to produce BPG. The chain is Glyceraldehyde-3-phosphate dehydrogenase (gapA) from Salmonella typhi.